The sequence spans 234 residues: Orotidine 5'-phosphate decarboxylase (234 aa).

Substrate is bound by residues Asp10, Lys32, 59-68 (DLKLHDIPTT), Thr122, Arg184, Gln193, Gly213, and Arg214. Lys61 serves as the catalytic Proton donor.

The protein belongs to the OMP decarboxylase family. Type 1 subfamily. Homodimer.

The catalysed reaction is orotidine 5'-phosphate + H(+) = UMP + CO2. It functions in the pathway pyrimidine metabolism; UMP biosynthesis via de novo pathway; UMP from orotate: step 2/2. Functionally, catalyzes the decarboxylation of orotidine 5'-monophosphate (OMP) to uridine 5'-monophosphate (UMP). This chain is Orotidine 5'-phosphate decarboxylase, found in Bacillus pumilus (strain SAFR-032).